The chain runs to 464 residues: Glycine--tRNA ligase (464 aa).

Substrate-binding residues include Arg-104 and Glu-175. ATP contacts are provided by residues 207 to 209, 217 to 222, 292 to 293, and 336 to 339; these read RNE, FRTREF, EL, and GVNR. A substrate-binding site is contributed by 222 to 226; sequence FEQME. A substrate-binding site is contributed by 332 to 336; it reads EPALG.

Belongs to the class-II aminoacyl-tRNA synthetase family. As to quaternary structure, homodimer.

Its subcellular location is the cytoplasm. It catalyses the reaction tRNA(Gly) + glycine + ATP = glycyl-tRNA(Gly) + AMP + diphosphate. Functionally, catalyzes the attachment of glycine to tRNA(Gly). This chain is Glycine--tRNA ligase, found in Leptospira interrogans serogroup Icterohaemorrhagiae serovar copenhageni (strain Fiocruz L1-130).